The primary structure comprises 98 residues: YcgL domain-containing protein CJA_2437 (98 aa).

The YcgL domain maps to 3-87; that stretch reads IIAEIYRSPK…RDLVDAEAKR (85 aa).

This chain is YcgL domain-containing protein CJA_2437, found in Cellvibrio japonicus (strain Ueda107) (Pseudomonas fluorescens subsp. cellulosa).